The sequence spans 1169 residues: Translation initiation factor IF-2 (1169 aa).

Disordered stretches follow at residues 69-108 (IKAKNENPKNNDNKNNKNFSNPSHPEKLSKEGLNKKPLLI) and 139-568 (ALSK…LRAA). 2 stretches are compositionally biased toward basic and acidic residues: residues 71-83 (AKNENPKNNDNKN) and 92-102 (HPEKLSKEGLN). Positions 139–156 (ALSKNQNKTNTSVITTPN) are enriched in polar residues. Over residues 157–171 (LKDKKNPSALQDKKP) the composition is skewed to basic and acidic residues. Over residues 196–214 (NLANSNRNINANKINNSVN) the composition is skewed to low complexity. Residues 231–248 (ADNNNFPKKNLNSPNVKS) are compositionally biased toward polar residues. Over residues 265–281 (NTNRPNSNSRQPSSNTQ) the composition is skewed to low complexity. 3 stretches are compositionally biased toward polar residues: residues 282–294 (ISANRPGGQNRQG), 412–432 (MQLQKTNASNKEKPNISNVNK), and 439–455 (NQKTKAPNSRLNTSPSP). The segment covering 472-486 (GRTDWDDSAKLEALR) has biased composition (basic and acidic residues). Positions 544-560 (KQFKKKKKETTRQRQKR) are enriched in basic residues. The region spanning 661–838 (KRPPVITVMG…EVEDLQANPE (178 aa)) is the tr-type G domain. Positions 670 to 677 (GHVDHGKT) are G1. GTP is bound at residue 670–677 (GHVDHGKT). Residues 695–699 (GITQH) form a G2 region. The segment at 720–723 (DTPG) is G3. GTP contacts are provided by residues 720–724 (DTPGH) and 774–777 (NKID). The interval 774–777 (NKID) is G4. Positions 810-812 (SAI) are G5.

This sequence belongs to the TRAFAC class translation factor GTPase superfamily. Classic translation factor GTPase family. IF-2 subfamily.

Its subcellular location is the cytoplasm. In terms of biological role, one of the essential components for the initiation of protein synthesis. Protects formylmethionyl-tRNA from spontaneous hydrolysis and promotes its binding to the 30S ribosomal subunits. Also involved in the hydrolysis of GTP during the formation of the 70S ribosomal complex. This Prochlorococcus marinus subsp. pastoris (strain CCMP1986 / NIES-2087 / MED4) protein is Translation initiation factor IF-2.